Reading from the N-terminus, the 1014-residue chain is Ephrin type-B receptor 6 (1014 aa).

Positions 1–32 are cleaved as a signal peptide; sequence MATEGTTGSGSRVVAGMVCSLWLLVLGSSVLA. The Extracellular portion of the chain corresponds to 33-591; the sequence is LEEVLLDTTG…LPEKLSLVIG (559 aa). The 199-residue stretch at 34 to 232 folds into the Eph LBD domain; sequence EEVLLDTTGE…FSYTCPSVLR (199 aa). 2 Fibronectin type-III domains span residues 364-479 and 480-575; these read PPSA…TSHE and VPSA…TLPQ. A glycan (N-linked (GlcNAc...) asparagine) is linked at N473. The chain crosses the membrane as a helical span at residues 592–612; sequence SILGALAFLLLAAITVLAVIF. At 613–1014 the chain is on the cytoplasmic side; the sequence is QRKRRGTGYT…HLRQPGSVEV (402 aa). The 250-residue stretch at 663-912 folds into the Protein kinase domain; that stretch reads IKIEEVIGAG…QLVAAFDKMI (250 aa). 669–677 contacts ATP; that stretch reads IGAGSFGEV. The 65-residue stretch at 941-1005 folds into the SAM domain; the sequence is PCLDSPQAWL…LHNIQLLQQH (65 aa). Residues 1012 to 1014 carry the PDZ-binding motif; sequence VEV.

It belongs to the protein kinase superfamily. Tyr protein kinase family. Ephrin receptor subfamily. Interacts with CBL and EPHB1. Interacts with FYN; this interaction takes place in a ligand-independent manner. Ligand-binding increases phosphorylation on tyrosine residues. Phosphorylation on tyrosine residues is mediated by transphosphorylation by the catalytically active EPHB1 in a ligand-independent manner. Tyrosine phosphorylation of the receptor may act as a switch on the functional transition from cell adhesion/attraction to de-adhesion/repulsion. As to expression, high level in thymus, and brain. Very low levels of expression in kidney, lung, liver, bone marrow, skeletal muscle, spleen from 2 week old and adult mice, heart, testes and embryonic stem cells.

The protein localises to the cell membrane. It is found in the secreted. Functionally, kinase-defective receptor for members of the ephrin-B family. Binds to ephrin-B1 and ephrin-B2. Modulates cell adhesion and migration by exerting both positive and negative effects upon stimulation with ephrin-B2. Inhibits JNK activation, T-cell receptor-induced IL-2 secretion and CD25 expression upon stimulation with ephrin-B2. This Mus musculus (Mouse) protein is Ephrin type-B receptor 6 (Ephb6).